The chain runs to 89 residues: Cell division topological specificity factor (89 aa).

It belongs to the MinE family.

Prevents the cell division inhibition by proteins MinC and MinD at internal division sites while permitting inhibition at polar sites. This ensures cell division at the proper site by restricting the formation of a division septum at the midpoint of the long axis of the cell. The polypeptide is Cell division topological specificity factor (Photorhabdus laumondii subsp. laumondii (strain DSM 15139 / CIP 105565 / TT01) (Photorhabdus luminescens subsp. laumondii)).